Consider the following 1228-residue polypeptide: Minor fimbrium subunit Mfa5 (1228 aa).

An N-terminal signal peptide occupies residues 1–25 (MMKRYTIILAVFLLFCTVFTFQIKA). Residues 144–267 (DVVMVIDQSS…QYPVKNVTTA (124 aa)) enclose the VWFA domain.

As to quaternary structure, minor fimbriae are composed of a structural subunit, most often Mfa1, and the accessory subunits Mfa3, Mfa4 and Mfa5. Fimbrium assembly occurs by linear, head-to-tail oligomerization of fimbrial subunits. This is mediated via insertion of a C-terminal beta-strand from one subunit into a groove in the N-terminal domain of the following subunit.

The protein resides in the fimbrium. Functionally, accessory subunit of the minor fimbriae. These filamentous pili are attached to the cell surface; they mediate biofilm formation, adhesion onto host cells and onto other bacteria that are part of the oral microbiome. They play an important role in invasion of periodontal tissues and are recognized as major virulence factors. Fimbrium subunits from different strains have highly divergent sequences, and this correlates with pathogenicity. The polypeptide is Minor fimbrium subunit Mfa5 (Porphyromonas gingivalis (strain ATCC 33277 / DSM 20709 / CIP 103683 / JCM 12257 / NCTC 11834 / 2561)).